Consider the following 878-residue polypeptide: AP-5 complex subunit beta-1 (878 aa).

Positions 234–260 (RLQPQAPSWPAAEEGEGERSLTAREHS) are disordered. Residues 250–260 (GERSLTAREHS) show a composition bias toward basic and acidic residues.

As to quaternary structure, probably part of the adaptor protein complex 5 (AP-5), a tetramer composed of AP5B1, AP5M1, AP5S1 and AP5Z1. Interacts with ZFYVE26 and SPG11.

As part of AP-5, a probable fifth adaptor protein complex it may be involved in endosomal transport. This chain is AP-5 complex subunit beta-1 (AP5B1), found in Homo sapiens (Human).